The chain runs to 75 residues: Dermaseptin-SP3 (75 aa).

The signal sequence occupies residues 1–22; it reads MAFLKKSLFLVLFLGLVSLSMC. Positions 23–45 are excised as a propeptide; that stretch reads EEEKRENEVEEEQEDDEQSELRR. Proline 72 carries the proline amide modification. Residues 74 to 75 constitute a propeptide that is removed on maturation; that stretch reads EQ.

The protein belongs to the frog skin active peptide (FSAP) family. Dermaseptin subfamily. In terms of tissue distribution, expressed by the skin glands.

It localises to the secreted. The protein resides in the target cell membrane. Its function is as follows. Antimicrobial peptide with activity against Gram-positive and Gram-negative bacteria and fungi. Has been tested against E.coli (MIC=47.50-128 uM), S.aureus (MIC=189.98-512 uM), K.pneumoniae (MIC&gt;189.98 uM) and C.albicans (MIC&gt;189.98 uM). Probably acts by disturbing membrane functions with its alpha-helical amphipathic structure. May penetrate bacterial membranes, but stay at the mammalian membrane surface. Shows a very weak hemolytic activity. This Agalychnis spurrelli (Gliding leaf frog) protein is Dermaseptin-SP3.